We begin with the raw amino-acid sequence, 299 residues long: MLSTRLALRSNIPMADFTTWRVGGPAQWLLEPASVDETLEALQWAQQEHLPCRVIGAGSNLLIHDDGLPGLTLSLRKLQGASLNAENGVVEALAGEPIPTLARRAARAGLNGLAWSVGIPGTVGGAAVMNAGAQGGCTADWLESVRVAPLVGGVSFELSRDELDFDYRHSRLQDEELVVLSARFRLEPGHDPEEITRITSGNLSHRTSTQPYTQPSCGSVFRNPEPLKAGRLIEGLGLKGNRVGGAEVSTLHANFIVNTGAATAADIDSLIQRVQQQVEAAHSLHLHPEVKRLGFTEAA.

The FAD-binding PCMH-type domain occupies 21–189; that stretch reads RVGGPAQWLL…LSARFRLEPG (169 aa). Arginine 168 is a catalytic residue. Serine 219 acts as the Proton donor in catalysis. The active site involves glutamate 289.

It belongs to the MurB family. It depends on FAD as a cofactor.

It localises to the cytoplasm. The catalysed reaction is UDP-N-acetyl-alpha-D-muramate + NADP(+) = UDP-N-acetyl-3-O-(1-carboxyvinyl)-alpha-D-glucosamine + NADPH + H(+). The protein operates within cell wall biogenesis; peptidoglycan biosynthesis. Its function is as follows. Cell wall formation. This is UDP-N-acetylenolpyruvoylglucosamine reductase from Parasynechococcus marenigrum (strain WH8102).